Reading from the N-terminus, the 151-residue chain is MD-2-related lipid-recognition protein (151 aa).

Residues 1-18 form the signal peptide; the sequence is MAALHWLLLAALLGCTLA. 3 disulfide bridges follow: C27–C141, C45–C51, and C95–C100. Residue N58 is glycosylated (N-linked (GlcNAc...) asparagine).

Post-translationally, N-glycosylated. In terms of tissue distribution, hemolymph (at protein level). Constitutively expressed mainly in fat body and also in hemocytes and secreted into hemolymph. Not detected in midgut, epidermis, or Malpighian tubule of naive larvae.

The protein localises to the secreted. In terms of biological role, binds to lipopolysaccharide from a variety of Gram-negative bacteria and to lipid A. This chain is MD-2-related lipid-recognition protein, found in Manduca sexta (Tobacco hawkmoth).